We begin with the raw amino-acid sequence, 317 residues long: Urease accessory protein 6 (317 aa).

This sequence belongs to the UreF family. As to quaternary structure, URE4, URE6 and URE7 may form a complex that acts as a GTP-hydrolysis-dependent molecular chaperone, activating the urease apoprotein URE1.

Urease accessory protein required for the maturation and activation of urease via the functional incorporation of the urease nickel metallocenter. Plays a role in host brain invasion. The chain is Urease accessory protein 6 from Cryptococcus neoformans var. grubii serotype A (strain H99 / ATCC 208821 / CBS 10515 / FGSC 9487) (Filobasidiella neoformans var. grubii).